A 424-amino-acid polypeptide reads, in one-letter code: Histidine--tRNA ligase (424 aa).

This sequence belongs to the class-II aminoacyl-tRNA synthetase family. As to quaternary structure, homodimer.

It is found in the cytoplasm. It carries out the reaction tRNA(His) + L-histidine + ATP = L-histidyl-tRNA(His) + AMP + diphosphate + H(+). The polypeptide is Histidine--tRNA ligase (Pectobacterium carotovorum subsp. carotovorum (strain PC1)).